Here is a 297-residue protein sequence, read N- to C-terminus: Putative thiosulfate sulfurtransferase SseA (297 aa).

2 consecutive Rhodanese domains span residues glycine 31–leucine 138 and isoleucine 168–valine 286. Catalysis depends on cysteine 245, which acts as the Cysteine persulfide intermediate. Arginine 250 is a binding site for substrate.

The catalysed reaction is thiosulfate + hydrogen cyanide = thiocyanate + sulfite + 2 H(+). In Mycobacterium tuberculosis (strain CDC 1551 / Oshkosh), this protein is Putative thiosulfate sulfurtransferase SseA (sseA).